The following is a 196-amino-acid chain: Protein LSM12 homolog B (196 aa).

Residues 3-70 (APGPGEYFSV…LAYVSEVDII (68 aa)) enclose the Sm domain. The AD domain maps to 81–175 (ASLNFNKLVN…IVEKHFRDVE (95 aa)).

Belongs to the LSM12 family.

In Danio rerio (Zebrafish), this protein is Protein LSM12 homolog B (lsm12b).